The primary structure comprises 880 residues: Pyruvate, phosphate dikinase (880 aa).

Residues 1 to 348 (MNKLIYYFGN…LYILQTRTAK (348 aa)) form an N-terminal region. An ATP-binding site is contributed by R97. The segment at 349–405 (RTAIAAINIAVQMVKEKLISKEQALMRIDPESLNQLLHTRIDYSKGLTSIAEGLPAS) is linker 1. The tract at residues 406–503 (PGAATGIVVF…VIKQGDIITI (98 aa)) is central. At T458 the chain carries Phosphothreonine; by PDRP1. H460 serves as the catalytic Tele-phosphohistidine intermediate. The interval 504-538 (DGGSGKIFLGEMPLIQPTFSEESKLILDWADEISS) is linker 2. The tract at residues 539 to 880 (LKVRANAETV…AAQAKIKQGS (342 aa)) is C-terminal. The substrate site is built by R566, R622, E750, G771, T772, N773, and D774. Mg(2+) is bound at residue E750. Position 774 (D774) interacts with Mg(2+). The Proton donor role is filled by C836.

Belongs to the PEP-utilizing enzyme family. Homodimer. Mg(2+) is required as a cofactor. Phosphorylation of Thr-458 in the dark inactivates the enzyme. Dephosphorylation upon light stimulation reactivates the enzyme.

The enzyme catalyses pyruvate + phosphate + ATP = phosphoenolpyruvate + AMP + diphosphate + H(+). Activated by light-induced dephosphorylation. Inhibited by dark-induced phosphorylation. Both reactions are catalyzed by PDRP1. In terms of biological role, catalyzes the reversible phosphorylation of pyruvate and phosphate. This Rickettsia prowazekii (strain Madrid E) protein is Pyruvate, phosphate dikinase (ppdK).